A 1079-amino-acid polypeptide reads, in one-letter code: MSQENVSDKVRNIQKQIGHNIKFGQRPPSLRKSEGDEGSSDEEEVPQSPLRVLAQVENEPPETSAKEKSVSHDTVQHRTPVKSPRTKRPPPPGTIESINLDAVPQSVPRLDNTAAKHKLSVKPKNQRVSRKHRRFTQEFHEDDFSEIQEEFEKDEEVFDSSREDYGIIHGSKEDYEPTEKSQRQRFHEEEKEHLEIKKREQEEERKMEKHRRMIEEQRLEEEKRRRQEEERLQKVEEERKQREEEERKKREEEERRREEEERRLRHEEERKRQEEEERMKKEEEERKRAEEERRQQELLAERLRLEEERKREQEERRRKEEEEAEKRRIQELQEKRLREEEHRIREEERCRQEEAERKRLEEEERKRQLQEEKAGSTDPEWKRKAEELRWREMEERQRPFTFKVSSGEKQILFQKVNLTPVTPATGQQGETTAETWEGAKASSPGGPDSPTLSSSLYVPHTAILVTGAQLCGTAVNLDQIKDTACKSLLGLSEGKKAMGTPPSKSKTSPDRKSGKTKSVFESSLSTDQSNAAVLAEWASIRSKIFKGAEEGKYPEYTDQSRRPTSEDLNTVPFSHTNLRKTMSASAKFSITPARKKFADSNRNSEIFGQEEGVKTESAFTETSPVQKELPSLGTKVQSRGSKLVRIADEECMFAKDLPSFLVPSPPHGSPKSQRSESGSPIQAESEDSDTKDEDGEQKAQGGDEQPSPFGIKLRRTNYSLRFHNEQSAEKKKKRYSAGDSFEGVPVPLTAIDQDSDNSTLSEKSSPISPQQENIEFQTTVAPSKESRSKFSRSTLPLARTEGDNMSPKPPLYQKPATSPKPSEGATPLLSPLPKPGRRTSGDTISQRTGEAEQVATEQGSDHKGGVTASGPSQKSGQGEEDVKEKKSFFPSISIPWREKTDRRTELIKKEKPSLQARHSLDSSRSQDKETGPLWITLALQKQKGFREQQQNREERRNQREAKLAEKQARDRESAGSSPTEDKGNGSSSIISKHQTADENKRPDTLLARFERRDNLKKANTLPSSVTVEITDSTPSPPATKDVTKRFPPGDTTQVSTEPAWLALAKRKAKAWSDCPQIIK.

Basic and acidic residues predominate over residues 1-11 (MSQENVSDKVR). Disordered stretches follow at residues 1 to 293 (MSQE…EEER), 308 to 327 (ERKR…AEKR), 341 to 383 (EHRI…EWKR), 420 to 453 (PVTP…PTLS), 493 to 522 (EGKK…VFES), 606 to 639 (IFGQ…VQSR), and 658 to 1054 (PSFL…TTQV). A compositionally biased stretch (acidic residues) spans 36-45 (DEGSSDEEEV). The span at 64 to 76 (SAKEKSVSHDTVQ) shows a compositional bias: basic and acidic residues. A compositionally biased stretch (basic residues) spans 115–134 (AKHKLSVKPKNQRVSRKHRR). The segment covering 140–158 (HEDDFSEIQEEFEKDEEVF) has biased composition (acidic residues). Residues 159–293 (DSSREDYGII…EERKRAEEER (135 aa)) show a composition bias toward basic and acidic residues. Polar residues predominate over residues 420 to 434 (PVTPATGQQGETTAE). Residues 670 to 682 (PKSQRSESGSPIQ) show a composition bias toward polar residues. Residues 684-695 (ESEDSDTKDEDG) show a composition bias toward acidic residues. Residues 756-781 (DNSTLSEKSSPISPQQENIEFQTTVA) are compositionally biased toward polar residues. Composition is skewed to basic and acidic residues over residues 896–930 (WREK…DKET) and 944–983 (GFRE…EDKG). Polar residues predominate over residues 984 to 993 (NGSSSIISKH). Residues 994-1016 (QTADENKRPDTLLARFERRDNLK) show a composition bias toward basic and acidic residues. Residues 1020–1033 (TLPSSVTVEITDST) show a composition bias toward polar residues.

As to quaternary structure, directly interacts with actin-capping proteins; this interaction decreases the binding of capping proteins to actin.

It is found in the cytoplasm. The protein localises to the cytosol. Functionally, involved in epithelial cell integrity by acting on the maintenance of the actin cytoskeleton. Positively regulates the actin polymerization, by inhibiting the interaction of actin-capping proteins with actin. The protein is Capping protein inhibiting regulator of actin dynamics (crad) of Danio rerio (Zebrafish).